We begin with the raw amino-acid sequence, 212 residues long: Orotate phosphoribosyltransferase (212 aa).

Residues Arg97, Lys101, His103, and 123–131 (EDLISTGGS) contribute to the 5-phospho-alpha-D-ribose 1-diphosphate site. Ser127 serves as a coordination point for orotate.

It belongs to the purine/pyrimidine phosphoribosyltransferase family. PyrE subfamily. As to quaternary structure, homodimer. The cofactor is Mg(2+).

It catalyses the reaction orotidine 5'-phosphate + diphosphate = orotate + 5-phospho-alpha-D-ribose 1-diphosphate. Its pathway is pyrimidine metabolism; UMP biosynthesis via de novo pathway; UMP from orotate: step 1/2. Its function is as follows. Catalyzes the transfer of a ribosyl phosphate group from 5-phosphoribose 1-diphosphate to orotate, leading to the formation of orotidine monophosphate (OMP). This is Orotate phosphoribosyltransferase from Bacteroides fragilis (strain ATCC 25285 / DSM 2151 / CCUG 4856 / JCM 11019 / LMG 10263 / NCTC 9343 / Onslow / VPI 2553 / EN-2).